A 373-amino-acid chain; its full sequence is Anhydro-N-acetylmuramic acid kinase (373 aa).

12–19 (GTSLDGVD) provides a ligand contact to ATP.

It belongs to the anhydro-N-acetylmuramic acid kinase family.

It carries out the reaction 1,6-anhydro-N-acetyl-beta-muramate + ATP + H2O = N-acetyl-D-muramate 6-phosphate + ADP + H(+). The protein operates within amino-sugar metabolism; 1,6-anhydro-N-acetylmuramate degradation. It functions in the pathway cell wall biogenesis; peptidoglycan recycling. Functionally, catalyzes the specific phosphorylation of 1,6-anhydro-N-acetylmuramic acid (anhMurNAc) with the simultaneous cleavage of the 1,6-anhydro ring, generating MurNAc-6-P. Is required for the utilization of anhMurNAc either imported from the medium or derived from its own cell wall murein, and thus plays a role in cell wall recycling. This chain is Anhydro-N-acetylmuramic acid kinase, found in Salmonella dublin (strain CT_02021853).